Reading from the N-terminus, the 1112-residue chain is Carbamoyl phosphate synthase large chain (1112 aa).

Residues 1–407 (MPRRTDLRHV…ALGKVMRSLE (407 aa)) are carboxyphosphate synthetic domain. The ATP site is built by R134, R174, G180, G181, E213, I215, E220, G246, V247, H248, Q290, and E304. Residues 138-333 (KDIVTKVGGE…IAKIAAKLAI (196 aa)) form the ATP-grasp 1 domain. Residues Q290, E304, and N306 each contribute to the Mg(2+) site. Residues Q290, E304, and N306 each contribute to the Mn(2+) site. Residues 408-559 (TGRAGFWTAP…ELDPAAESEV (152 aa)) are oligomerization domain. Positions 560–965 (APQAERPKVL…AFAKSQTAAY (406 aa)) are carbamoyl phosphate synthetic domain. The ATP-grasp 2 domain maps to 693–884 (GEVLRTAGLP…LAKACARIML (192 aa)). ATP is bound by residues R729, R768, L770, E775, G800, I801, H802, S803, Q843, and E855. Residues Q843, E855, and N857 each contribute to the Mg(2+) site. Positions 843, 855, and 857 each coordinate Mn(2+). The MGS-like domain maps to 966–1112 (GSLPSEGTVF…LQELHSELGN (147 aa)). The interval 966–1112 (GSLPSEGTVF…LQELHSELGN (147 aa)) is allosteric domain.

The protein belongs to the CarB family. As to quaternary structure, composed of two chains; the small (or glutamine) chain promotes the hydrolysis of glutamine to ammonia, which is used by the large (or ammonia) chain to synthesize carbamoyl phosphate. Tetramer of heterodimers (alpha,beta)4. Requires Mg(2+) as cofactor. Mn(2+) is required as a cofactor.

It carries out the reaction hydrogencarbonate + L-glutamine + 2 ATP + H2O = carbamoyl phosphate + L-glutamate + 2 ADP + phosphate + 2 H(+). The enzyme catalyses hydrogencarbonate + NH4(+) + 2 ATP = carbamoyl phosphate + 2 ADP + phosphate + 2 H(+). It functions in the pathway amino-acid biosynthesis; L-arginine biosynthesis; carbamoyl phosphate from bicarbonate: step 1/1. It participates in pyrimidine metabolism; UMP biosynthesis via de novo pathway; (S)-dihydroorotate from bicarbonate: step 1/3. Its function is as follows. Large subunit of the glutamine-dependent carbamoyl phosphate synthetase (CPSase). CPSase catalyzes the formation of carbamoyl phosphate from the ammonia moiety of glutamine, carbonate, and phosphate donated by ATP, constituting the first step of 2 biosynthetic pathways, one leading to arginine and/or urea and the other to pyrimidine nucleotides. The large subunit (synthetase) binds the substrates ammonia (free or transferred from glutamine from the small subunit), hydrogencarbonate and ATP and carries out an ATP-coupled ligase reaction, activating hydrogencarbonate by forming carboxy phosphate which reacts with ammonia to form carbamoyl phosphate. This is Carbamoyl phosphate synthase large chain from Mycobacterium sp. (strain JLS).